Reading from the N-terminus, the 436-residue chain is GTPase Der (436 aa).

EngA-type G domains are found at residues 4-167 (SVVA…PNES) and 176-351 (IYFS…ESHT). GTP is bound by residues 10–17 (GRPNVGKS), 57–61 (DTGGI), 119–122 (NKMD), 182–189 (GRPNVGKS), 229–233 (DTAGM), and 294–297 (NKWD). One can recognise a KH-like domain in the interval 352–436 (KRIPTNVLND…PIKLFARRRQ (85 aa)).

It belongs to the TRAFAC class TrmE-Era-EngA-EngB-Septin-like GTPase superfamily. EngA (Der) GTPase family. As to quaternary structure, associates with the 50S ribosomal subunit.

GTPase that plays an essential role in the late steps of ribosome biogenesis. The sequence is that of GTPase Der from Oceanobacillus iheyensis (strain DSM 14371 / CIP 107618 / JCM 11309 / KCTC 3954 / HTE831).